Consider the following 696-residue polypeptide: DNA ligase (696 aa).

Residues Asp36–Asp40, Ser85–Leu86, and Glu123 contribute to the NAD(+) site. Lys125 acts as the N6-AMP-lysine intermediate in catalysis. Arg146, Glu181, Lys319, and Lys343 together coordinate NAD(+). The Zn(2+) site is built by Cys437, Cys440, Cys455, and Cys461. In terms of domain architecture, BRCT spans Pro618–Leu696.

The protein belongs to the NAD-dependent DNA ligase family. LigA subfamily. Mg(2+) serves as cofactor. It depends on Mn(2+) as a cofactor.

The enzyme catalyses NAD(+) + (deoxyribonucleotide)n-3'-hydroxyl + 5'-phospho-(deoxyribonucleotide)m = (deoxyribonucleotide)n+m + AMP + beta-nicotinamide D-nucleotide.. DNA ligase that catalyzes the formation of phosphodiester linkages between 5'-phosphoryl and 3'-hydroxyl groups in double-stranded DNA using NAD as a coenzyme and as the energy source for the reaction. It is essential for DNA replication and repair of damaged DNA. The polypeptide is DNA ligase (Bordetella bronchiseptica (strain ATCC BAA-588 / NCTC 13252 / RB50) (Alcaligenes bronchisepticus)).